A 114-amino-acid chain; its full sequence is Abscisic stress-ripening protein 2 (114 aa).

Disordered stretches follow at residues methionine 1–valine 25 and phenylalanine 88–tyrosine 114. Residues glutamine 7–lysine 16 are compositionally biased toward basic residues. Residues alanine 97–glycine 107 are compositionally biased toward basic and acidic residues.

Belongs to the abscisic acid and water stress-induced protein family.

In Solanum lycopersicum (Tomato), this protein is Abscisic stress-ripening protein 2.